Reading from the N-terminus, the 163-residue chain is Nucleotide-binding protein CJE0423 (163 aa).

It belongs to the YajQ family.

In terms of biological role, nucleotide-binding protein. The protein is Nucleotide-binding protein CJE0423 of Campylobacter jejuni (strain RM1221).